The following is a 268-amino-acid chain: Type III pantothenate kinase (268 aa).

An ATP-binding site is contributed by 6–13 (DVGNTNIV). Residues tyrosine 100 and 107–110 (GADR) contribute to the substrate site. The active-site Proton acceptor is the aspartate 109. A K(+)-binding site is contributed by aspartate 129. Position 132 (threonine 132) interacts with ATP. Threonine 184 contacts substrate.

It belongs to the type III pantothenate kinase family. Homodimer. The cofactor is NH4(+). Requires K(+) as cofactor.

The protein localises to the cytoplasm. The catalysed reaction is (R)-pantothenate + ATP = (R)-4'-phosphopantothenate + ADP + H(+). The protein operates within cofactor biosynthesis; coenzyme A biosynthesis; CoA from (R)-pantothenate: step 1/5. In terms of biological role, catalyzes the phosphorylation of pantothenate (Pan), the first step in CoA biosynthesis. This is Type III pantothenate kinase from Alkaliphilus metalliredigens (strain QYMF).